The primary structure comprises 862 residues: MDGLKEITAAVASLGGTTDLSTYMVNFDLGDMMDQSAGVVIDDVHPPVEGASVDSAMDVDAESEDEKDEEPGTGRDEPEVESEADEDPDEVEDAIPAAVPSTIPLSTTIRGFGADLGLGKNLTPADLAGNGLGKYAATLFSKTLPTLAAVVEQKGAIDPGSSVAKSIVTLLSSELGNALGIFSRLPTREQNKMAAVMILMKVLGRTALPPLTKTDEGVLSAINLVFSGAKRKVLVSTHSDITKFIIFNDDGTIPTLGVDTVAPLMKYYDPRLKLTTLVLIKNLGNNGTVEVKRRSKGKTLVMRERIPVECFLFRAFPVTESSDNIYATLDFVKRLLKGVSTQSSYVYVKNPKSIGDDFLNTKNTSLTLGDAPLTVKLSFRKPTNATSQSGFKRWLLICKWLARGGRIELGPKSTLRSGHEEESLEEEVNTGCIRSMASLTRLASRAWSPKNILKVNDRPVMTPSILNEIPDFVHRGNTLPIWLLFAASLRLDIVAVKEWLSTEGGDPRSIDVAKLTYHQYLFLRLLSDAGIAKKGLSKLLTATNNWLITEMSFIVMYKGSYGVNPTVLSTISDNNVPNLPIFSWIGEIPLWSTSGIVEKVKIVHTNSSLVSRMMLLSDVTEVAKVHAIKAKVRAEQKASKESAKGEDAAKKAPKRKREAEAGTETPKKKQKEEKSEKPKKTGKAEKSTGTAKVTKKEKTEKKTPQTKSTNKKNVKSVSAEAGTAVTPDEANGKKKSTQVKKKESAGQHTTEKKKRTAAKKKTVDRPSGHRPSSKKEYRSQEFVSSDDSSDEEVISKPRVTTTENMKSTKKATLASNMDDDGDDDGFMTCAGQFDIGGGSGFLTSTAGRNRKSNKQSKTLLLS.

Disordered regions lie at residues 45–91 (HPPV…PDEV), 633–824 (RAEQ…GDDD), and 837–862 (GGSG…LLLS). Composition is skewed to acidic residues over residues 57–69 (MDVD…EKDE) and 78–91 (PEVE…PDEV). 3 stretches are compositionally biased toward basic and acidic residues: residues 633–650 (RAEQ…DAAK), 657–686 (REAE…KAEK), and 694–703 (TKKEKTEKKT). Positions 751–760 (EKKKRTAAKK) are enriched in basic residues. The span at 761 to 779 (KTVDRPSGHRPSSKKEYRS) shows a compositional bias: basic and acidic residues.

This is an uncharacterized protein from Ictaluridae (bullhead catfishes).